Reading from the N-terminus, the 21-residue chain is Tertiapin (21 aa).

2 disulfide bridges follow: cysteine 3–cysteine 14 and cysteine 5–cysteine 18.

Oxidation of Met-13 results in the loss of biological activity. In terms of processing, an amidation at Lys-21 is suggested in Ref.1. As to expression, expressed by the venom gland.

The protein localises to the secreted. In terms of biological role, presynaptic neurotoxin that blocks the inwardly rectifying Kir1.1/KCNJ1 and Kir3.1/3.4 (KCNJ3/KCNJ5) potassium channels with high affinity by binding to the M1-M2 linker region of these channels in a 1:1 stoichiometry. It may block the potassium channel pore by occluding its alpha helix into the channel vestibule. Tertiapin-Q also inhibits calcium-activated large conductance BK-type (KCNMA) potassium channels in a concentration-, and voltage-dependent manner, in addition to inhibiting Kir3.1/3.2 (KCNJ3/KCNJ6) heteromultimers potassium channels. It can prevent dose-dependently acetylcholine(ACh)-induced atrioventricular blocks in mammalian hearts, as KCNJ3/KCNJ5 channels (also named I(KACh), because these channels are activated by ACh) are found in mammalian myocytes. Interacts specifically with calmodulin in the presence of calcium. This is Tertiapin from Apis mellifera (Honeybee).